The sequence spans 212 residues: N-(5'-phosphoribosyl)anthranilate isomerase (212 aa).

It belongs to the TrpF family.

It catalyses the reaction N-(5-phospho-beta-D-ribosyl)anthranilate = 1-(2-carboxyphenylamino)-1-deoxy-D-ribulose 5-phosphate. Its pathway is amino-acid biosynthesis; L-tryptophan biosynthesis; L-tryptophan from chorismate: step 3/5. This is N-(5'-phosphoribosyl)anthranilate isomerase from Roseiflexus castenholzii (strain DSM 13941 / HLO8).